The chain runs to 494 residues: Lysine--tRNA ligase (494 aa).

Mg(2+) is bound by residues E399 and E406.

It belongs to the class-II aminoacyl-tRNA synthetase family. Mg(2+) serves as cofactor.

The protein resides in the cytoplasm. It carries out the reaction tRNA(Lys) + L-lysine + ATP = L-lysyl-tRNA(Lys) + AMP + diphosphate. The polypeptide is Lysine--tRNA ligase (lysS) (Saccharolobus solfataricus (strain ATCC 35092 / DSM 1617 / JCM 11322 / P2) (Sulfolobus solfataricus)).